Here is a 400-residue protein sequence, read N- to C-terminus: Glycine betaine/proline betaine transport system ATP-binding protein ProV (400 aa).

An ABC transporter domain is found at 29-265 (LSKEQILEKT…PANDYVRTFF (237 aa)). 61 to 68 (GLSGSGKS) is a binding site for ATP. CBS domains follow at residues 282 to 341 (RTPN…GLDA) and 343 to 400 (LIDA…VNNG).

The protein belongs to the ABC transporter superfamily. In terms of assembly, the complex is composed of two ATP-binding proteins (ProV), two transmembrane proteins (ProW) and a solute-binding protein (ProX).

It localises to the cell inner membrane. Its function is as follows. Part of the ProU ABC transporter complex involved in glycine betaine and proline betaine uptake. Probably responsible for energy coupling to the transport system. The sequence is that of Glycine betaine/proline betaine transport system ATP-binding protein ProV from Escherichia coli (strain K12).